The sequence spans 1083 residues: Centrosomal protein of 131 kDa (1083 aa).

2 disordered regions span residues 1–155 (MKGT…AGPR) and 220–258 (GSESSGFGKLPKNVSSATHSARNNTGGSTGLPRRKEVTE). The segment at 1-250 (MKGTRAIGSV…RNNTGGSTGL (250 aa)) is interaction with PLK4. Phosphoserine occurs at positions 14 and 35. S47 carries the post-translational modification Phosphoserine; by MAPKAPK2. Positions 68 to 87 (QAINNLRRSNSTTQVSQPRS) are enriched in polar residues. S78 bears the Phosphoserine; by MAPKAPK2 and PLK4 mark. Phosphoserine occurs at positions 89, 105, 114, 146, and 150. Over residues 138–148 (LPSNARSSSAL) the composition is skewed to polar residues. Positions 232–245 (NVSSATHSARNNTG) are enriched in polar residues. Positions 269–289 (NQATVTIQRWYRHQVQRRGAG) constitute an IQ domain. A disordered region spans residues 301–429 (REEQRQRSGE…PQQPPEDRTQ (129 aa)). Basic and acidic residues-rich tracts occupy residues 317-333 (HQQKEAARRKAREEKAR) and 360-369 (GPPENPRETR). S381 carries the post-translational modification Phosphoserine. T383 bears the Phosphothreonine mark. Residues S453, S489, D496, S499, S731, and S798 each carry the phosphoserine modification. The segment covering 1047 to 1076 (KEEAVSSLRTQHEAAVKRADHLEELLEQHR) has biased composition (basic and acidic residues). A disordered region spans residues 1047-1083 (KEEAVSSLRTQHEAAVKRADHLEELLEQHRRPTPSTK).

The protein belongs to the CEP131 family. Self-associates. Associates with the centriolar satellite BBSome protein complex. Interacts with BBS4; the interaction limits BBS4 availability for association with the BBSome complex, and hence negatively regulates ciliary localization of the BBSome complex. Interacts with MIB1. Interacts with PCM1; the interaction increases in response to ultraviolet light (UV) radiation. Associates with microtubules; association with microtubules is reduced in response to cellular stress, such as UV stimulation, in a process that requires p38 MAP kinase signaling. Interacts with CEP290, DCTN1, PCNT, PCM1 and CEP152. Interacts with 14-3-3 proteins following UV-induced phosphorylation by MAPKAPK2; this inhibits formation of novel centriolar satellites. Interacts with SDCCAG8. Interacts with CCDC61. Interacts with PLK4. Post-translationally, ubiquitinated. Undergoes monoubiquitination catalyzed by the E3 ubiquitin-protein ligase MIB1 in proliferating cells, preventing cilia formation. Monoubiquitination by MIB1 is inhibited in response to cellular stress, such as ultraviolet light (UV) radiation or heat shock, resulting in cilia formation initiation. MAPKAPK2-dependent phosphorylation at Ser-47 and Ser-78 occurs in response to cellular stress such as exposure to ultraviolet irradiation and promotes binding to 14-3-3 proteins which leads to cytoplasmic sequestration of CEP131 and blocks formation of new centriolar satellites. Phosphorylation at Ser-78 mediated by PLK4 is essential for proper organization and integrity of centriolar satellites but is dispensable for its localization to centrioles and its function in ciliogenesis.

It localises to the cytoplasm. Its subcellular location is the cytoskeleton. The protein resides in the microtubule organizing center. The protein localises to the centrosome. It is found in the centriolar satellite. It localises to the centriole. Its subcellular location is the cilium basal body. The protein resides in the cytoplasmic vesicle. The protein localises to the secretory vesicle. It is found in the acrosome. Component of centriolar satellites contributing to the building of a complex and dynamic network required to regulate cilia/flagellum formation. In proliferating cells, MIB1-mediated ubiquitination induces its sequestration within centriolar satellites, precluding untimely cilia formation initiation. In contrast, during normal and ultraviolet or heat shock cellular stress-induced ciliogenesis, its non-ubiquitinated form is rapidly displaced from centriolar satellites and recruited to centrosome/basal bodies in a microtubule- and p38 MAPK-dependent manner. Also acts as a negative regulator of BBSome ciliary trafficking. Plays a role in sperm flagellar formation; may be involved in the regulation of intraflagellar transport (IFT) and/or intramanchette (IMT) trafficking, which are important for axoneme extension and/or cargo delivery to the nascent sperm tail. Required for optimal cell proliferation and cell cycle progression; may play a role in the regulation of genome stability in non-ciliogenic cells. Involved in centriole duplication. Required for CEP152, WDR62 and CEP63 centrosomal localization and promotes the centrosomal localization of CDK2. Essential for maintaining proper centriolar satellite integrity. The polypeptide is Centrosomal protein of 131 kDa (CEP131) (Homo sapiens (Human)).